The chain runs to 444 residues: NAD(P)-specific glutamate dehydrogenase (444 aa).

3 residues coordinate substrate: Lys88, Gln109, and Lys112. Lys124 (proton donor) is an active-site residue. Gly163 serves as a coordination point for substrate. 2 residues coordinate NADP(+): Thr207 and Asn238. Residue Ser376 participates in substrate binding.

This sequence belongs to the Glu/Leu/Phe/Val dehydrogenases family. As to quaternary structure, homohexamer.

It carries out the reaction L-glutamate + NAD(+) + H2O = 2-oxoglutarate + NH4(+) + NADH + H(+). It catalyses the reaction L-glutamate + NADP(+) + H2O = 2-oxoglutarate + NH4(+) + NADPH + H(+). In terms of biological role, catalyzes the reversible oxidative deamination of glutamate to alpha-ketoglutarate and ammonia. P.ruminicola possess both NADP(H)- and NAD(H)-dependent activities on the same enzyme, suggesting that both anabolic and catabolic forms of the enzyme might occur. This Xylanibacter ruminicola (Prevotella ruminicola) protein is NAD(P)-specific glutamate dehydrogenase (gdhA).